An 861-amino-acid polypeptide reads, in one-letter code: Protein argonaute-3 (861 aa).

Methionine 1 is modified (N-acetylmethionine). The region spanning 230 to 349 is the PAZ domain; sequence PVIQFMCEVL…LPLEVCNIVA (120 aa). Residues 518 to 820 enclose the Piwi domain; the sequence is LIIVILPGKT…VAFRARYHLV (303 aa). An interaction with guide RNA region spans residues 530-567; sequence YAEVKRVGDTLLGMATQCVQVKNVIKTSPQTLSNLCLK. Aspartate 598, glutamate 638, and aspartate 670 together coordinate a divalent metal cation. Positions 758-806 are interaction with guide RNA; sequence QGTSRPSHYHVLWDDNCFTADELQLLTYQPSAHTYVHCTRSVSIPAPAY. Residue histidine 809 coordinates a divalent metal cation. Residues 824 to 847 are disordered; the sequence is RDSAEGSHVSGQSNGRDPQALAKA. Residue serine 826 is modified to Phosphoserine.

It belongs to the argonaute family. Ago subfamily. In terms of assembly, interacts with EIF4B, IMP8, PRMT5 and TNRC6B. Interacts with APOBEC3F, APOBEC3G and APOBEC3H. Interacts with EDC4. In terms of processing, ubiquitinated on surface-exposed lysines by a SCF-like E3 ubiquitin-protein ligase complex containing ZSWIM8 during target-directed microRNA degradation (TDMD), a process that mediates degradation of microRNAs (miRNAs). Ubiquitination by the SCF-like E3 ubiquitin-protein ligase complex containing ZSWIM8 leads to its subsequent degradation, thereby exposing miRNAs for degradation. ZSWIM8 recognizes and binds AGO3 when it is engaged with a TDMD target.

Its subcellular location is the cytoplasm. It is found in the P-body. The enzyme catalyses Endonucleolytic cleavage to 5'-phosphomonoester.. In terms of biological role, required for RNA-mediated gene silencing (RNAi). Binds to short RNAs such as microRNAs (miRNAs) and represses the translation of mRNAs which are complementary to them. Proposed to be involved in stabilization of small RNA derivates (siRNA) derived from processed RNA polymerase III-transcribed Alu repeats containing a DR2 retinoic acid response element (RARE) in stem cells and in the subsequent siRNA-dependent degradation of a subset of RNA polymerase II-transcribed coding mRNAs by recruiting a mRNA decapping complex involving EDC4. Possesses RNA slicer activity but only on select RNAs bearing 5'- and 3'-flanking sequences to the region of guide-target complementarity. The sequence is that of Protein argonaute-3 (AGO3) from Bos taurus (Bovine).